The chain runs to 164 residues: Putative pre-16S rRNA nuclease (164 aa).

Belongs to the YqgF nuclease family.

The protein resides in the cytoplasm. Its function is as follows. Could be a nuclease involved in processing of the 5'-end of pre-16S rRNA. This chain is Putative pre-16S rRNA nuclease, found in Rhizobium johnstonii (strain DSM 114642 / LMG 32736 / 3841) (Rhizobium leguminosarum bv. viciae).